The sequence spans 311 residues: Putative dihydroorotate dehydrogenase A (fumarate) (311 aa).

Substrate is bound by residues K45, N69–L73, and N128. K45–T46 lines the FMN pocket. FMN is bound at residue N128. C131 acts as the Nucleophile in catalysis. Positions 165 and 193 each coordinate FMN. N194–S195 is a substrate binding site. Residues G220, G248 to G249, and G270 to T271 each bind FMN.

Belongs to the dihydroorotate dehydrogenase family. Type 1 subfamily. Homodimer. FMN serves as cofactor.

It is found in the cytoplasm. The catalysed reaction is (S)-dihydroorotate + fumarate = orotate + succinate. It participates in pyrimidine metabolism; UMP biosynthesis via de novo pathway. Its function is as follows. Catalyzes the conversion of dihydroorotate to orotate with fumarate as the electron acceptor. The chain is Putative dihydroorotate dehydrogenase A (fumarate) (pyrD) from Streptococcus pyogenes serotype M1.